Reading from the N-terminus, the 519-residue chain is 2,3-bisphosphoglycerate-independent phosphoglycerate mutase (519 aa).

Positions 18 and 68 each coordinate Mn(2+). The Phosphoserine intermediate role is filled by S68. Substrate is bound by residues H129, 159–160 (RD), R191, R197, 267–270 (RADR), and K341. Residues D408, H412, D449, H450, and H468 each coordinate Mn(2+).

This sequence belongs to the BPG-independent phosphoglycerate mutase family. As to quaternary structure, monomer. Requires Mn(2+) as cofactor.

It carries out the reaction (2R)-2-phosphoglycerate = (2R)-3-phosphoglycerate. It functions in the pathway carbohydrate degradation; glycolysis; pyruvate from D-glyceraldehyde 3-phosphate: step 3/5. Functionally, catalyzes the interconversion of 2-phosphoglycerate and 3-phosphoglycerate. The protein is 2,3-bisphosphoglycerate-independent phosphoglycerate mutase of Coxiella burnetii (strain RSA 493 / Nine Mile phase I).